Reading from the N-terminus, the 274-residue chain is Bis(5'-nucleosyl)-tetraphosphatase, symmetrical (274 aa).

This sequence belongs to the Ap4A hydrolase family.

The catalysed reaction is P(1),P(4)-bis(5'-adenosyl) tetraphosphate + H2O = 2 ADP + 2 H(+). In terms of biological role, hydrolyzes diadenosine 5',5'''-P1,P4-tetraphosphate to yield ADP. The protein is Bis(5'-nucleosyl)-tetraphosphatase, symmetrical of Shewanella baltica (strain OS155 / ATCC BAA-1091).